An 87-amino-acid chain; its full sequence is Phosphoribosyl-ATP pyrophosphatase (87 aa).

It belongs to the PRA-PH family.

It is found in the cytoplasm. The catalysed reaction is 1-(5-phospho-beta-D-ribosyl)-ATP + H2O = 1-(5-phospho-beta-D-ribosyl)-5'-AMP + diphosphate + H(+). It functions in the pathway amino-acid biosynthesis; L-histidine biosynthesis; L-histidine from 5-phospho-alpha-D-ribose 1-diphosphate: step 2/9. This chain is Phosphoribosyl-ATP pyrophosphatase, found in Leifsonia xyli subsp. xyli (strain CTCB07).